A 554-amino-acid chain; its full sequence is MSAIPKKCTVLVIGGGPGGSYAASALAREGIDTVVLEGDKFPRYHIGESMLASMRHLLKFVELDGKFDSYGFVKKPGAAFKLNKNKREGYTDFLAAGGPNNYAWNVVRSEADNLMFQHAGESGAKIFDGVSVKSIQFENPTEVPDGEPNLNPGKPVSATYQIKETKEQGQIDFDYVVDASGRIGILSTKYMKNRRYNQGLKNIANWGYWEGCNKYAPGTPRENSPFFEALQDESGWAWFIPLHNGTVSVGVVMNQKLATQKKQEADLDSTEFYHDTLNKISPNLRELIGDGKFVSNVKTASDYSYSASSYSFPYARIVGDAGCFIDPYFSSGVHLALTSGLSAATTISASIRGQVDEELGSEWHTKKFSDAYTRFLLVVLSAYKQIRHQEEPVLSDFDEDNFDRAFSFFRPIIQGTADAANNKLSQEELNKTLEFCAFAFEPVENDEDRSKAMSAMQEAVDNGTGYHPDLSPEQLKAVKHIQARRAMRTSDTMNIESFGTDAINGFVPNLVRGSLGLRKQEAMSGDMGGANGHVDETNGVTVNGHHQPEGVKAH.

Positions 15, 18, and 48 each coordinate FAD. Chloride-binding residues include Ser331 and Gly332. Position 333 (Val333) interacts with FAD.

This sequence belongs to the flavin-dependent halogenase family.

It carries out the reaction ilicicolin B + FADH2 + chloride + O2 = ilicicolin A + FAD + 2 H2O + H(+). The protein operates within secondary metabolite biosynthesis; terpenoid biosynthesis. Flavin-dependent halogenase; part of the asc-1 gene cluster that mediates the biosynthesis of both ascochlorin and ascofuranone, a strong inhibitor of cyanide-insensitive alternative oxidases and a promising drug candidate against African trypanosomiasis. The first step in the pathway is performed by the non-reducing polyketide synthase ascC that produces orsellinic acid by condensing acetyl-CoA with 3 malonyl-CoA units. Orsellinic acid is then prenylated by the prenyltransferase ascA to yield ilicicolinic acid B. Ilicicolinic acid B is further reduced to ilicicolin B by the reductase ascB. The halogenase ascD then chlorinates ilicicolin B to produce ilicicolin A which is converted to ilicicolin A epoxide by the cytochrome P450 monooxygenase ascE that catalyzes stereoselective epoxidation of the terminal double bond of the prenyl group. Ilicicolin A epoxide is the last common precursor for the biosynthesis of ascofuranone and ascochlorin. The terpene cyclase ascF produces a monocyclic terpene, and the cyclization reaction is proposed to be initiated by protonation of the terminal epoxide of ilicicolin A epoxide to generate a monocyclic tertiarycation, which is followed by a series of hydride and methyl shifts with abstraction of proton, leading to the formation of the (14S,15R,19R)-trimethylcyclohexanone ring structure of ilicicolin C, which is finally reduced to ascochlorin by the dehydrogenase ascG. On the other hand, ilicicolin A epoxide is hydroxylated by the cytochrome P450 monooxygenase ascH, and the resultant product is cyclized by the terpene cyclase ascI to ascofuranol via protonation-initiated epoxide ring opening, which facilitates the 6-endo-tet cyclization to form the tetrahy-drofuran ring. Finally, ascofuranol is oxidized into ascofuranone by ascJ. This is Flavin-dependent halogenase ascD from Acremonium egyptiacum (Oospora egyptiaca).